Consider the following 260-residue polypeptide: Scytalidopepsin B (260 aa).

The first 20 residues, 1–20, serve as a signal peptide directing secretion; it reads MKFTTAAVLSALVSAEIAFA. Residues 21 to 54 constitute a propeptide that is removed on maturation; that stretch reads APGGNGFARRQARRQARAAGLKASPFRQVNAKEA. Residues Cys-101 and Cys-181 are joined by a disulfide bond. Glu-190 acts as the Proton acceptor in catalysis. 2 disulfides stabilise this stretch: Cys-195–Cys-219 and Cys-248–Cys-257.

It belongs to the peptidase G1 family. In terms of assembly, monomer.

It catalyses the reaction Hydrolysis of proteins with broad specificity, cleaving 24-Phe-|-Phe-25, but not 15-Leu-|-Tyr-16 and 25-Phe-|-Tyr-26 in the B chain of insulin.. The sequence is that of Scytalidopepsin B from Scytalidium lignicola (Hyphomycete).